We begin with the raw amino-acid sequence, 663 residues long: Transketolase 2 (663 aa).

Residue H25 coordinates substrate. Thiamine diphosphate contacts are provided by residues H65 and G113–L115. A Mg(2+)-binding site is contributed by D154. Residues G155 and N184 each coordinate thiamine diphosphate. Mg(2+) contacts are provided by N184 and I186. The substrate site is built by H259, R356, and S383. H259 is a binding site for thiamine diphosphate. E410 functions as the Proton donor in the catalytic mechanism. F436 is a binding site for thiamine diphosphate. H460, D468, and R519 together coordinate substrate.

Belongs to the transketolase family. In terms of assembly, homodimer. Mg(2+) serves as cofactor. Ca(2+) is required as a cofactor. The cofactor is Mn(2+). It depends on Co(2+) as a cofactor. Requires thiamine diphosphate as cofactor.

The enzyme catalyses D-sedoheptulose 7-phosphate + D-glyceraldehyde 3-phosphate = aldehydo-D-ribose 5-phosphate + D-xylulose 5-phosphate. In terms of biological role, catalyzes the transfer of a two-carbon ketol group from a ketose donor to an aldose acceptor, via a covalent intermediate with the cofactor thiamine pyrophosphate. The polypeptide is Transketolase 2 (tkt2) (Vibrio parahaemolyticus serotype O3:K6 (strain RIMD 2210633)).